Here is a 203-residue protein sequence, read N- to C-terminus: MAKESTTIDVGEPSTVTKSSSHVVKKKGFVAAAAGGGAKRGLAIFDFLLRLAAIGVTIGAASVMYTAQETLPFFTQFLQFQAGYDDLPAFQYFVIAVAIVASYLVLSLPFSIVTIVRPLAVAPRLILLIFDTLVVTLNTSAAAAAASIVYLAHNGNQSTNWLPICQQFGDFCQNVSTAVVAASIAILFFIVLIIISAIALKRH.

At Ala2 the chain carries N-acetylalanine. Residues 2-40 (AKESTTIDVGEPSTVTKSSSHVVKKKGFVAAAAGGGAKR) are Cytoplasmic-facing. Residues 41-61 (GLAIFDFLLRLAAIGVTIGAA) form a helical membrane-spanning segment. Residues 62-92 (SVMYTAQETLPFFTQFLQFQAGYDDLPAFQY) are Extracellular-facing. A helical transmembrane segment spans residues 93–113 (FVIAVAIVASYLVLSLPFSIV). Residues 114–124 (TIVRPLAVAPR) lie on the Cytoplasmic side of the membrane. A helical membrane pass occupies residues 125–145 (LILLIFDTLVVTLNTSAAAAA). Residues 146–177 (ASIVYLAHNGNQSTNWLPICQQFGDFCQNVST) are Extracellular-facing. N-linked (GlcNAc...) asparagine glycosylation is found at Asn156 and Asn174. A helical transmembrane segment spans residues 178 to 198 (AVVAASIAILFFIVLIIISAI). Residues 199–203 (ALKRH) lie on the Cytoplasmic side of the membrane.

The protein belongs to the Casparian strip membrane proteins (CASP) family. In terms of assembly, homodimer and heterodimers.

The protein resides in the cell membrane. Functionally, regulates membrane-cell wall junctions and localized cell wall deposition. Required for establishment of the Casparian strip membrane domain (CSD) and the subsequent formation of Casparian strips, a cell wall modification of the root endodermis that determines an apoplastic barrier between the intraorganismal apoplasm and the extraorganismal apoplasm and prevents lateral diffusion. The chain is Casparian strip membrane protein 1 from Arabidopsis lyrata subsp. lyrata (Lyre-leaved rock-cress).